A 497-amino-acid polypeptide reads, in one-letter code: WASH complex subunit homolog 1 (497 aa).

The disordered stretch occupies residues 306 to 497 (EASEPTEAEA…PPNFDDEEWD (192 aa)). A compositionally biased stretch (pro residues) spans 323 to 339 (LPPPPPPMKLDPSPQPA). The span at 341–350 (TPVEITEIPP) shows a compositional bias: low complexity. The segment covering 351 to 372 (IISPPAPPPPPPPPPPPPPPQT) has biased composition (pro residues). Residues 390-412 (GRSDLMAAIRAAGGAGNAKLSRI) form the WH2 domain.

The protein belongs to the WASH1 family. As to quaternary structure, component of the WASH core complex. Component of the DHIC (ddl-1-containing hsf-1 inhibitory) complex, which contains at least ddl-1, ddl-2, hsb-1 and hsf-1. Within the complex, interacts with ddl-1. Formation of the DHIC may be dependent upon the Insulin/IGF-1-like signaling (IIS) mediated pathway. Expressed in several neurons located throughout the body.

Its function is as follows. Acts as a component of the WASH core complex that functions as a nucleation-promoting factor (NPF) at the surface of endosomes, where it recruits and activates the Arp2/3 complex to induce actin polymerization, playing a key role in the fission of tubules that serve as transport intermediates during endosome sorting. Acts as a component of the DHIC (ddl-1-containing hsf-1 inhibitory complex) which modulates lifespan by sequestering the heat shock transcription factor hsf-1 to negatively regulate its binding to DNA and its transcriptional activity. In Caenorhabditis elegans, this protein is WASH complex subunit homolog 1.